We begin with the raw amino-acid sequence, 233 residues long: Fibroblast growth factor 8 (233 aa).

Positions 1–22 are cleaved as a signal peptide; that stretch reads MGSPRSALSCLLLHLLVLCLQA. N155 carries an N-linked (GlcNAc...) asparagine glycan.

Belongs to the heparin-binding growth factors family. In terms of assembly, monomer. Homodimer. Interacts with FGFR1, FGFR2, FGFR3 and FGFR4. Affinity between fibroblast growth factors (FGFs) and their receptors is increased by heparan sulfate glycosaminoglycans that function as coreceptors.

Its subcellular location is the secreted. Its function is as follows. Plays an important role in the regulation of embryonic development, cell proliferation, cell differentiation and cell migration. Required for normal brain, eye, ear and limb development during embryogenesis. Required for normal development of the gonadotropin-releasing hormone (GnRH) neuronal system. Plays a role in neurite outgrowth in hippocampal cells. In Homo sapiens (Human), this protein is Fibroblast growth factor 8 (FGF8).